The primary structure comprises 153 residues: Aspartate carbamoyltransferase regulatory chain (153 aa).

Cys-109, Cys-114, Cys-138, and Cys-141 together coordinate Zn(2+).

It belongs to the PyrI family. Contains catalytic and regulatory chains. The cofactor is Zn(2+).

Its function is as follows. Involved in allosteric regulation of aspartate carbamoyltransferase. The sequence is that of Aspartate carbamoyltransferase regulatory chain from Escherichia coli O7:K1 (strain IAI39 / ExPEC).